The chain runs to 120 residues: Large ribosomal subunit protein uL18 (120 aa).

This sequence belongs to the universal ribosomal protein uL18 family. As to quaternary structure, part of the 50S ribosomal subunit; part of the 5S rRNA/L5/L18/L25 subcomplex. Contacts the 5S and 23S rRNAs.

In terms of biological role, this is one of the proteins that bind and probably mediate the attachment of the 5S RNA into the large ribosomal subunit, where it forms part of the central protuberance. The chain is Large ribosomal subunit protein uL18 from Beijerinckia indica subsp. indica (strain ATCC 9039 / DSM 1715 / NCIMB 8712).